We begin with the raw amino-acid sequence, 853 residues long: Aminotransferase PigE (853 aa).

503-504 contacts pyridoxal 5'-phosphate; the sequence is GT. Position 645 is an N6-(pyridoxal phosphate)lysine (lysine 645). Residue threonine 680 participates in pyridoxal 5'-phosphate binding.

This sequence belongs to the class-III pyridoxal-phosphate-dependent aminotransferase family. In terms of assembly, homodimer. Requires pyridoxal 5'-phosphate as cofactor.

It functions in the pathway antibiotic biosynthesis; prodigiosin biosynthesis. In terms of biological role, involved in the biosynthesis of 2-methyl-3-n-amyl-pyrrole (MAP), one of the terminal products involved in the biosynthesis of the red antibiotic prodigiosin (Pig). Catalyzes the transamination to the aldehyde group of 3-acetyloctanal, resulting in an aminoketone, which spontaneously cyclizes to yield the dihydro form of MAP (H2MAP). The sequence is that of Aminotransferase PigE from Serratia sp. (strain ATCC 39006) (Prodigiosinella confusarubida).